The chain runs to 84 residues: uncharacterized protein (84 aa).

Its function is as follows. This protein may be involved in virus assembly. This is an uncharacterized protein from Saccharolobus solfataricus (Sulfolobus solfataricus).